A 447-amino-acid chain; its full sequence is Ion-translocating oxidoreductase complex subunit C (447 aa).

4Fe-4S ferredoxin-type domains are found at residues 359–389 and 399–430; these read AEVL…GRIA and RCRE…LIRY. [4Fe-4S] cluster contacts are provided by Cys-369, Cys-372, Cys-375, Cys-379, Cys-408, Cys-411, Cys-414, and Cys-418.

It belongs to the 4Fe4S bacterial-type ferredoxin family. RnfC subfamily. In terms of assembly, the Rnf complex is probably composed of eight subunits, including RnfA, RnfB, RnfC, RnfD, RnfE and RnfG. [4Fe-4S] cluster serves as cofactor.

It localises to the cell membrane. Functionally, part of a membrane-bound complex that couples electron transfer with translocation of ions across the membrane. Catalyzes Na(+) transport, most probably coupled to electron transfer from reduced ferredoxin to methanophenazine and heterodisulfide reductase. Involved in heterodisulfide reduction during methanogenesis from acetate. The polypeptide is Ion-translocating oxidoreductase complex subunit C (Methanosarcina acetivorans (strain ATCC 35395 / DSM 2834 / JCM 12185 / C2A)).